A 144-amino-acid polypeptide reads, in one-letter code: Large ribosomal subunit protein uL16 (144 aa).

The protein belongs to the universal ribosomal protein uL16 family. Part of the 50S ribosomal subunit.

Its function is as follows. Binds 23S rRNA and is also seen to make contacts with the A and possibly P site tRNAs. This is Large ribosomal subunit protein uL16 from Lacticaseibacillus paracasei (strain ATCC 334 / BCRC 17002 / CCUG 31169 / CIP 107868 / KCTC 3260 / NRRL B-441) (Lactobacillus paracasei).